A 794-amino-acid polypeptide reads, in one-letter code: Lon protease (794 aa).

A Lon N-terminal domain is found at 13-204 (VPLYPLREII…KVYMHLTNEV (192 aa)). 356–363 (GPPGVGKT) lines the ATP pocket. One can recognise a Lon proteolytic domain in the interval 592-773 (KDRVGVATGL…REVFVQALNP (182 aa)). Catalysis depends on residues Ser679 and Lys722. The span at 774-788 (TSPAPTAATSARTPA) shows a compositional bias: low complexity. Residues 774 to 794 (TSPAPTAATSARTPAGAPPPQ) form a disordered region.

It belongs to the peptidase S16 family. As to quaternary structure, homohexamer. Organized in a ring with a central cavity.

Its subcellular location is the cytoplasm. It catalyses the reaction Hydrolysis of proteins in presence of ATP.. Functionally, ATP-dependent serine protease that mediates the selective degradation of mutant and abnormal proteins as well as certain short-lived regulatory proteins. Required for cellular homeostasis and for survival from DNA damage and developmental changes induced by stress. Degrades polypeptides processively to yield small peptide fragments that are 5 to 10 amino acids long. Binds to DNA in a double-stranded, site-specific manner. In Citrifermentans bemidjiense (strain ATCC BAA-1014 / DSM 16622 / JCM 12645 / Bem) (Geobacter bemidjiensis), this protein is Lon protease.